The following is a 500-amino-acid chain: Glycerol-3-phosphate acyltransferase 7 (500 aa).

Transmembrane regions (helical) follow at residues 38 to 58 (GLIR…LDVL) and 235 to 255 (ALII…RIFV). The HXXXXD motif motif lies at 298 to 303 (HRTLMD).

This sequence belongs to the GPAT/DAPAT family. As to expression, weakly or not expressed in roots, leaves, seedlings, developing siliques and flower buds.

It localises to the membrane. The catalysed reaction is sn-glycerol 3-phosphate + an acyl-CoA = a 1-acyl-sn-glycero-3-phosphate + CoA. The protein operates within phospholipid metabolism; CDP-diacylglycerol biosynthesis; CDP-diacylglycerol from sn-glycerol 3-phosphate: step 1/3. Esterifies acyl-group from acyl-ACP to the sn-1 position of glycerol-3-phosphate, an essential step in glycerolipid biosynthesis. This Arabidopsis thaliana (Mouse-ear cress) protein is Glycerol-3-phosphate acyltransferase 7 (GPAT7).